Consider the following 309-residue polypeptide: THO complex subunit Tho3 (309 aa).

WD repeat units lie at residues G22 to T61, G65 to E107, E109 to T148, A192 to S231, R234 to K273, and P275 to L309.

It belongs to the THOC3 family. As to quaternary structure, component of the transcription/export (TREX) complex, which is at least is formed of SUB2, TEX1 and YRA1 and the THO complex composed of HPR1, MFT1, THO2 and THP1.

It localises to the nucleus. Functionally, component of the TREX complex, which operates in coupling transcription elongation to mRNA export. This chain is THO complex subunit Tho3 (THO3), found in Schizosaccharomyces pombe (strain 972 / ATCC 24843) (Fission yeast).